We begin with the raw amino-acid sequence, 132 residues long: Small ribosomal subunit protein uS8 (132 aa).

It belongs to the universal ribosomal protein uS8 family. Part of the 30S ribosomal subunit. Contacts proteins S5 and S12.

Its function is as follows. One of the primary rRNA binding proteins, it binds directly to 16S rRNA central domain where it helps coordinate assembly of the platform of the 30S subunit. The protein is Small ribosomal subunit protein uS8 of Streptococcus sanguinis (strain SK36).